A 66-amino-acid chain; its full sequence is Large ribosomal subunit protein uL29 (66 aa).

The protein belongs to the universal ribosomal protein uL29 family.

The sequence is that of Large ribosomal subunit protein uL29 from Bartonella henselae (strain ATCC 49882 / DSM 28221 / CCUG 30454 / Houston 1) (Rochalimaea henselae).